The chain runs to 220 residues: Octanoyltransferase (220 aa).

The BPL/LPL catalytic domain occupies 27-208 (PGTADEIWLC…QLARAHGHAV (182 aa)). Residues 66–73 (RGGQVTYH), 139–141 (ALG), and 152–154 (GLA) contribute to the substrate site. C170 functions as the Acyl-thioester intermediate in the catalytic mechanism.

This sequence belongs to the LipB family.

It is found in the cytoplasm. The enzyme catalyses octanoyl-[ACP] + L-lysyl-[protein] = N(6)-octanoyl-L-lysyl-[protein] + holo-[ACP] + H(+). It functions in the pathway protein modification; protein lipoylation via endogenous pathway; protein N(6)-(lipoyl)lysine from octanoyl-[acyl-carrier-protein]: step 1/2. In terms of biological role, catalyzes the transfer of endogenously produced octanoic acid from octanoyl-acyl-carrier-protein onto the lipoyl domains of lipoate-dependent enzymes. Lipoyl-ACP can also act as a substrate although octanoyl-ACP is likely to be the physiological substrate. The sequence is that of Octanoyltransferase from Bordetella parapertussis (strain 12822 / ATCC BAA-587 / NCTC 13253).